The primary structure comprises 95 residues: Citrate lyase acyl carrier protein (95 aa).

O-(phosphoribosyl dephospho-coenzyme A)serine is present on Ser-14.

It belongs to the CitD family. Oligomer with a subunit composition of (alpha,beta,gamma)6.

It localises to the cytoplasm. Covalent carrier of the coenzyme of citrate lyase. This Haemophilus ducreyi (strain 35000HP / ATCC 700724) protein is Citrate lyase acyl carrier protein.